A 3081-amino-acid polypeptide reads, in one-letter code: Cilia- and flagella-associated protein 54 (3081 aa).

Disordered stretches follow at residues 542–579 (SGTA…AGGA), 591–626 (TQTA…QSSL), 910–942 (PPQP…GARK), 1406–1451 (ADAP…GITP), 1518–1586 (ESIL…YPVV), 1636–1657 (RRAA…EERP), 2176–2210 (GERT…LPEP), 2229–2306 (MASG…SQRA), and 2776–2806 (ARPV…SGDG). The span at 564 to 579 (GGSASPPNGSSGAGGA) shows a compositional bias: low complexity. The segment covering 1428 to 1449 (MPPPVPDPSAAGPPPLTPPEGI) has biased composition (pro residues). Residues 1538–1550 (GGKDDKKKDDKAP) are compositionally biased toward basic and acidic residues. 3 stretches are compositionally biased toward low complexity: residues 1638–1648 (AALAASASTAG), 2181–2199 (APKP…AAAA), and 2240–2269 (EPSS…SPTG). Pro residues predominate over residues 2289-2301 (PEVPGPPPPPPPS). Residues 2776-2788 (ARPVATSSSGARP) show a composition bias toward low complexity. Gly residues predominate over residues 2796-2805 (KPGAGGGSGD).

Belongs to the CFAP54 family. Part of the PDCP1 complex composed of CFAP46, CFAP54, CFAP74 and CFAP221; the PDCP1 complex binds calmodulin.

The protein localises to the cytoplasm. It localises to the cytoskeleton. The protein resides in the cilium axoneme. The sequence is that of Cilia- and flagella-associated protein 54 from Chlamydomonas reinhardtii (Chlamydomonas smithii).